The chain runs to 146 residues: Large ribosomal subunit protein uL11 (146 aa).

The protein belongs to the universal ribosomal protein uL11 family. In terms of assembly, part of the ribosomal stalk of the 50S ribosomal subunit. Interacts with L10 and the large rRNA to form the base of the stalk. L10 forms an elongated spine to which L12 dimers bind in a sequential fashion forming a multimeric L10(L12)X complex. One or more lysine residues are methylated.

Its function is as follows. Forms part of the ribosomal stalk which helps the ribosome interact with GTP-bound translation factors. The chain is Large ribosomal subunit protein uL11 from Corynebacterium jeikeium (strain K411).